Here is a 164-residue protein sequence, read N- to C-terminus: MADS-box transcription factor 51 (164 aa).

Residues 2-62 form the MADS-box domain; sequence ARRGRVQLRR…GKLYEYSSSS (61 aa). The tract at residues 133–164 is disordered; that stretch reads TKSKKMLAKQNGEGSRSRANSSGSRGQEEGSA.

As to expression, widely expressed.

The protein localises to the nucleus. In terms of biological role, probable transcription factor involved in the regulation of flowering time under short day (SD) conditions. Functions as a promoter of flowering under SD conditions, upstream of EHD1, HD3A and MADS14, but downstream of GIGANTEA (GI). May transmit a SD promotion signal from GI to EHD1. Functions independently of MADS50 to control flowering time. The protein is MADS-box transcription factor 51 of Oryza sativa subsp. japonica (Rice).